The following is a 314-amino-acid chain: 2,3-dihydroxyphenylpropionate/2,3-dihydroxicinnamic acid 1,2-dioxygenase (314 aa).

H115 (proton donor) is an active-site residue. H179 functions as the Proton acceptor in the catalytic mechanism.

Belongs to the LigB/MhpB extradiol dioxygenase family. In terms of assembly, homotetramer. Fe(2+) serves as cofactor.

It catalyses the reaction 3-(2,3-dihydroxyphenyl)propanoate + O2 = (2Z,4E)-2-hydroxy-6-oxonona-2,4-dienedioate + H(+). It carries out the reaction (2E)-3-(2,3-dihydroxyphenyl)prop-2-enoate + O2 = (2Z,4E,7E)-2-hydroxy-6-oxonona-2,4,7-trienedioate + H(+). The protein operates within aromatic compound metabolism; 3-phenylpropanoate degradation. Functionally, catalyzes the non-heme iron(II)-dependent oxidative cleavage of 2,3-dihydroxyphenylpropionic acid and 2,3-dihydroxicinnamic acid into 2-hydroxy-6-ketononadienedioate and 2-hydroxy-6-ketononatrienedioate, respectively. This is 2,3-dihydroxyphenylpropionate/2,3-dihydroxicinnamic acid 1,2-dioxygenase from Rhodococcus jostii (strain RHA1).